The primary structure comprises 142 residues: Gonadotropin subunit beta-2 (142 aa).

Positions 1 to 23 (MLGLHVGTLISLFLCILLEPIEG) are cleaved as a signal peptide. Intrachain disulfides connect Cys29-Cys77, Cys43-Cys92, Cys46-Cys130, Cys54-Cys108, Cys58-Cys110, and Cys113-Cys120. An N-linked (GlcNAc...) asparagine glycan is attached at Asn33.

It belongs to the glycoprotein hormones subunit beta family. In terms of assembly, heterodimer of an alpha and a beta chain.

The protein resides in the secreted. Involved in gametogenesis and steroidogenesis. The chain is Gonadotropin subunit beta-2 (cgbb) from Oncorhynchus tshawytscha (Chinook salmon).